Here is a 185-residue protein sequence, read N- to C-terminus: Ribosome-recycling factor (185 aa).

This sequence belongs to the RRF family.

It is found in the cytoplasm. In terms of biological role, responsible for the release of ribosomes from messenger RNA at the termination of protein biosynthesis. May increase the efficiency of translation by recycling ribosomes from one round of translation to another. The sequence is that of Ribosome-recycling factor from Frankia casuarinae (strain DSM 45818 / CECT 9043 / HFP020203 / CcI3).